The primary structure comprises 480 residues: Acyl-coenzyme A synthetase ACSM6, mitochondrial (480 aa).

The N-terminal 21 residues, M1–C21, are a transit peptide targeting the mitochondrion. ATP-binding positions include T226–K234, E366–T371, D453, and R468.

This sequence belongs to the ATP-dependent AMP-binding enzyme family. As to quaternary structure, monomer. Requires Mg(2+) as cofactor. It depends on Mn(2+) as a cofactor.

The protein localises to the mitochondrion. It carries out the reaction a medium-chain fatty acid + ATP + CoA = a medium-chain fatty acyl-CoA + AMP + diphosphate. In terms of biological role, catalyzes the activation of fatty acids by CoA to produce an acyl-CoA, the first step in fatty acid metabolism. The protein is Acyl-coenzyme A synthetase ACSM6, mitochondrial (ACSM6) of Homo sapiens (Human).